The chain runs to 167 residues: Thioredoxin Y2, chloroplastic (167 aa).

The N-terminal 58 residues, 1 to 58 (MAISLATAYISPCFTPESSNSASPSRTLSSVRLPSQIRRFGSVQSPSSSTRFAPLTVR), are a transit peptide targeting the chloroplast. The Thioredoxin domain occupies 59-164 (AAKKQTFNSF…LVERIENSLQ (106 aa)). Active-site nucleophile residues include cysteine 88 and cysteine 91. Residues cysteine 88 and cysteine 91 are joined by a disulfide bond.

This sequence belongs to the thioredoxin family. Plant Y-type subfamily. In terms of tissue distribution, expressed in leaves.

The protein localises to the plastid. The protein resides in the chloroplast stroma. Functionally, thiol-disulfide oxidoreductase that poorly activates chloroplastic malate dehydrogenase (NADP-MDH) and fructose-1,6-bisphosphatase. Provides reducing equivalents for peroxiredoxin Q. This chain is Thioredoxin Y2, chloroplastic, found in Arabidopsis thaliana (Mouse-ear cress).